We begin with the raw amino-acid sequence, 185 residues long: Prorelaxin (185 aa).

A signal peptide spans 1 to 24 (MPRLFLFHLLGVCLLLNQFSRAVA). Intrachain disulfides connect Cys35-Cys172, Cys47-Cys185, and Cys171-Cys176. Residues 56 to 157 (SLNQEDAPLK…LRSLGLDTHS (102 aa)) constitute a propeptide, connecting peptide.

It belongs to the insulin family. Heterodimer of a B chain and an A chain linked by two disulfide bonds.

The protein localises to the secreted. Relaxin is an ovarian hormone that acts with estrogen to produce dilatation of the birth canal in many mammals. May be involved in remodeling of connective tissues during pregnancy, promoting growth of pubic ligaments and ripening of the cervix. The protein is Prorelaxin (RLN) of Macaca mulatta (Rhesus macaque).